The chain runs to 140 residues: MSRFLNVLRSWLVMVSIIAMGNTLQSFRDHTFLYEKLYTGKPNLVNGLQARTFGIWTLLSSVIRCLCAIDIHNKTLYHITLWTFLLALGHFLSELFVFGTAAPTVGVLAPLMVASFSILGMLVGLRYLEAEPVSRQKKRN.

A run of 4 helical transmembrane segments spans residues 4–24 (FLNVLRSWLVMVSIIAMGNTL), 52–72 (TFGIWTLLSSVIRCLCAIDIH), 79–99 (ITLWTFLLALGHFLSELFVFG), and 105–125 (VGVLAPLMVASFSILGMLVGL).

This sequence belongs to the ERG28 family.

It is found in the endoplasmic reticulum membrane. In Mus musculus (Mouse), this protein is Ergosterol biosynthetic protein 28 homolog.